A 230-amino-acid polypeptide reads, in one-letter code: UPF0702 transmembrane protein YcaP (230 aa).

The next 3 membrane-spanning stretches (helical) occupy residues 16–36 (FDFL…VFLF), 48–68 (MSLF…DVAF), and 75–95 (VPVL…MWLM).

It belongs to the UPF0702 family.

It is found in the cell membrane. The sequence is that of UPF0702 transmembrane protein YcaP (ycaP) from Escherichia coli (strain K12).